Reading from the N-terminus, the 156-residue chain is ATP synthase subunit b (156 aa).

Residues 7–27 (LFVQAIVFLILVLFTMKFVWP) form a helical membrane-spanning segment.

It belongs to the ATPase B chain family. F-type ATPases have 2 components, F(1) - the catalytic core - and F(0) - the membrane proton channel. F(1) has five subunits: alpha(3), beta(3), gamma(1), delta(1), epsilon(1). F(0) has three main subunits: a(1), b(2) and c(10-14). The alpha and beta chains form an alternating ring which encloses part of the gamma chain. F(1) is attached to F(0) by a central stalk formed by the gamma and epsilon chains, while a peripheral stalk is formed by the delta and b chains.

The protein localises to the cell inner membrane. In terms of biological role, f(1)F(0) ATP synthase produces ATP from ADP in the presence of a proton or sodium gradient. F-type ATPases consist of two structural domains, F(1) containing the extramembraneous catalytic core and F(0) containing the membrane proton channel, linked together by a central stalk and a peripheral stalk. During catalysis, ATP synthesis in the catalytic domain of F(1) is coupled via a rotary mechanism of the central stalk subunits to proton translocation. Functionally, component of the F(0) channel, it forms part of the peripheral stalk, linking F(1) to F(0). In Acidovorax sp. (strain JS42), this protein is ATP synthase subunit b.